The sequence spans 233 residues: Ribosomal RNA small subunit methyltransferase G (233 aa).

Residues Gly-91, Met-96, 142–143, and Arg-157 contribute to the S-adenosyl-L-methionine site; that span reads VE.

The protein belongs to the methyltransferase superfamily. RNA methyltransferase RsmG family.

Its subcellular location is the cytoplasm. The catalysed reaction is guanosine(527) in 16S rRNA + S-adenosyl-L-methionine = N(7)-methylguanosine(527) in 16S rRNA + S-adenosyl-L-homocysteine. In terms of biological role, specifically methylates the N7 position of guanine in position 527 of 16S rRNA. In Cupriavidus necator (strain ATCC 17699 / DSM 428 / KCTC 22496 / NCIMB 10442 / H16 / Stanier 337) (Ralstonia eutropha), this protein is Ribosomal RNA small subunit methyltransferase G.